Here is a 274-residue protein sequence, read N- to C-terminus: NH(3)-dependent NAD(+) synthetase (274 aa).

46-53 (GISGGQDS) is a binding site for ATP. Aspartate 52 is a Mg(2+) binding site. Arginine 140 provides a ligand contact to deamido-NAD(+). Threonine 160 is a binding site for ATP. Glutamate 165 is a Mg(2+) binding site. Residues lysine 173 and aspartate 180 each coordinate deamido-NAD(+). Lysine 189 and threonine 211 together coordinate ATP. 260–261 (HK) contacts deamido-NAD(+).

The protein belongs to the NAD synthetase family. As to quaternary structure, homodimer.

It carries out the reaction deamido-NAD(+) + NH4(+) + ATP = AMP + diphosphate + NAD(+) + H(+). It participates in cofactor biosynthesis; NAD(+) biosynthesis; NAD(+) from deamido-NAD(+) (ammonia route): step 1/1. Functionally, catalyzes the ATP-dependent amidation of deamido-NAD to form NAD. Uses ammonia as a nitrogen source. The protein is NH(3)-dependent NAD(+) synthetase of Streptococcus sanguinis (strain SK36).